Here is a 101-residue protein sequence, read N- to C-terminus: NADH-quinone oxidoreductase subunit K (101 aa).

The next 3 membrane-spanning stretches (helical) occupy residues 4-24, 30-50, and 61-81; these read LAHF…GIFL, IVLL…FVAF, and VFVF…LAIL.

It belongs to the complex I subunit 4L family. NDH-1 is composed of 14 different subunits. Subunits NuoA, H, J, K, L, M, N constitute the membrane sector of the complex.

The protein localises to the cell inner membrane. It carries out the reaction a quinone + NADH + 5 H(+)(in) = a quinol + NAD(+) + 4 H(+)(out). Its function is as follows. NDH-1 shuttles electrons from NADH, via FMN and iron-sulfur (Fe-S) centers, to quinones in the respiratory chain. The immediate electron acceptor for the enzyme in this species is believed to be ubiquinone. Couples the redox reaction to proton translocation (for every two electrons transferred, four hydrogen ions are translocated across the cytoplasmic membrane), and thus conserves the redox energy in a proton gradient. The protein is NADH-quinone oxidoreductase subunit K of Cupriavidus taiwanensis (strain DSM 17343 / BCRC 17206 / CCUG 44338 / CIP 107171 / LMG 19424 / R1) (Ralstonia taiwanensis (strain LMG 19424)).